Here is a 177-residue protein sequence, read N- to C-terminus: Ribosome maturation factor RimM (177 aa).

The PRC barrel domain maps to 100-177 (EDEYYWSDLV…TVLVAWPSDY (78 aa)).

This sequence belongs to the RimM family. In terms of assembly, binds ribosomal protein uS19.

Its subcellular location is the cytoplasm. In terms of biological role, an accessory protein needed during the final step in the assembly of 30S ribosomal subunit, possibly for assembly of the head region. Essential for efficient processing of 16S rRNA. May be needed both before and after RbfA during the maturation of 16S rRNA. It has affinity for free ribosomal 30S subunits but not for 70S ribosomes. In Psychrobacter arcticus (strain DSM 17307 / VKM B-2377 / 273-4), this protein is Ribosome maturation factor RimM.